A 294-amino-acid chain; its full sequence is N-acetylmuramic acid 6-phosphate etherase (294 aa).

An SIS domain is found at 56–219; it reads TSYSLKNGGR…STLSMVSVGK (164 aa). Glu-84 serves as the catalytic Proton donor. Glu-115 is an active-site residue.

This sequence belongs to the GCKR-like family. MurNAc-6-P etherase subfamily. Homodimer.

The catalysed reaction is N-acetyl-D-muramate 6-phosphate + H2O = N-acetyl-D-glucosamine 6-phosphate + (R)-lactate. Its pathway is amino-sugar metabolism; 1,6-anhydro-N-acetylmuramate degradation. It participates in amino-sugar metabolism; N-acetylmuramate degradation. It functions in the pathway cell wall biogenesis; peptidoglycan recycling. In terms of biological role, specifically catalyzes the cleavage of the D-lactyl ether substituent of MurNAc 6-phosphate, producing GlcNAc 6-phosphate and D-lactate. Together with AnmK, is also required for the utilization of anhydro-N-acetylmuramic acid (anhMurNAc) either imported from the medium or derived from its own cell wall murein, and thus plays a role in cell wall recycling. This is N-acetylmuramic acid 6-phosphate etherase from Francisella tularensis subsp. novicida (strain U112).